A 336-amino-acid chain; its full sequence is Iron-uptake system permease protein FeuC (336 aa).

Transmembrane regions (helical) follow at residues 7–27, 57–77, 85–105, 120–140, 150–170, 191–211, 246–266, 280–300, and 308–328; these read LFIA…SFSV, VVMA…IQAI, PGIL…MLLF, MPLF…IFAW, IILV…FLSL, ANWT…PILI, VAII…GLIA, YILP…DFAG, and EVPA…YLLF.

It belongs to the binding-protein-dependent transport system permease family. FecCD subfamily. In terms of assembly, the complex is composed of one ATP-binding protein (YusV), two transmembrane proteins (FeuB and FeuC) and a solute-binding protein (FeuA).

The protein localises to the cell membrane. Functionally, involved in the uptake of iron. Probably responsible for the translocation of the substrate across the membrane. Part of the ABC transporter complex FeuABC/YusV involved in import of the catecholate siderophores bacillibactin and enterobactin. The sequence is that of Iron-uptake system permease protein FeuC (feuC) from Bacillus subtilis (strain 168).